We begin with the raw amino-acid sequence, 62 residues long: DNA-directed RNA polymerase subunit omega (62 aa).

This sequence belongs to the RNA polymerase subunit omega family. The RNAP catalytic core consists of 2 alpha, 1 beta, 1 beta' and 1 omega subunit. When a sigma factor is associated with the core the holoenzyme is formed, which can initiate transcription.

It carries out the reaction RNA(n) + a ribonucleoside 5'-triphosphate = RNA(n+1) + diphosphate. In terms of biological role, promotes RNA polymerase assembly. Latches the N- and C-terminal regions of the beta' subunit thereby facilitating its interaction with the beta and alpha subunits. This chain is DNA-directed RNA polymerase subunit omega, found in Wigglesworthia glossinidia brevipalpis.